We begin with the raw amino-acid sequence, 46 residues long: Esculentin-1A (46 aa).

An intrachain disulfide couples C40 to C46.

It belongs to the frog skin active peptide (FSAP) family. Brevinin subfamily. Expressed by the skin glands.

It localises to the secreted. Functionally, shows antibacterial activity against representative Gram-negative and Gram-positive bacterial species, and hemolytic activity. The sequence is that of Esculentin-1A from Pelophylax lessonae (Pool frog).